A 524-amino-acid polypeptide reads, in one-letter code: Inosine-5'-monophosphate dehydrogenase (524 aa).

CBS domains follow at residues 121–180 (FILD…NTPV) and 184–242 (MTPR…PLAS). NAD(+)-binding positions include 280-282 (DSS) and 330-332 (GMG). Residues glycine 332 and glycine 334 each contribute to the K(+) site. Position 335 (serine 335) interacts with IMP. K(+) is bound at residue cysteine 337. Catalysis depends on cysteine 337, which acts as the Thioimidate intermediate. IMP contacts are provided by residues 370 to 372 (DGG), 393 to 394 (GG), and 417 to 421 (YRGMG). Arginine 439 serves as the catalytic Proton acceptor. Glutamine 451 contacts IMP. Residues glutamate 510 and glycine 511 each contribute to the K(+) site.

This sequence belongs to the IMPDH/GMPR family. As to quaternary structure, homotetramer. The cofactor is K(+).

The protein resides in the cytoplasm. The catalysed reaction is IMP + NAD(+) + H2O = XMP + NADH + H(+). The protein operates within purine metabolism; XMP biosynthesis via de novo pathway; XMP from IMP: step 1/1. Its activity is regulated as follows. Mycophenolic acid (MPA) is a non-competitive inhibitor that prevents formation of the closed enzyme conformation by binding to the same site as the amobile flap. In contrast, mizoribine monophosphate (MZP) is a competitive inhibitor that induces the closed conformation. MPA is a potent inhibitor of mammalian IMPDHs but a poor inhibitor of the bacterial enzymes. MZP is a more potent inhibitor of bacterial IMPDH. In terms of biological role, catalyzes the conversion of inosine 5'-phosphate (IMP) to xanthosine 5'-phosphate (XMP), the first committed and rate-limiting step in the de novo synthesis of guanine nucleotides, and therefore plays an important role in the regulation of cell growth. The protein is Inosine-5'-monophosphate dehydrogenase (gua1) of Schizosaccharomyces pombe (strain 972 / ATCC 24843) (Fission yeast).